The chain runs to 142 residues: Large ribosomal subunit protein uL13 (142 aa).

This sequence belongs to the universal ribosomal protein uL13 family. As to quaternary structure, part of the 50S ribosomal subunit.

This protein is one of the early assembly proteins of the 50S ribosomal subunit, although it is not seen to bind rRNA by itself. It is important during the early stages of 50S assembly. This is Large ribosomal subunit protein uL13 from Delftia acidovorans (strain DSM 14801 / SPH-1).